Consider the following 186-residue polypeptide: Elongation factor P (186 aa).

Belongs to the elongation factor P family.

It localises to the cytoplasm. It functions in the pathway protein biosynthesis; polypeptide chain elongation. Functionally, involved in peptide bond synthesis. Stimulates efficient translation and peptide-bond synthesis on native or reconstituted 70S ribosomes in vitro. Probably functions indirectly by altering the affinity of the ribosome for aminoacyl-tRNA, thus increasing their reactivity as acceptors for peptidyl transferase. This chain is Elongation factor P, found in Streptococcus agalactiae serotype Ia (strain ATCC 27591 / A909 / CDC SS700).